The following is a 152-amino-acid chain: Large ribosomal subunit protein eL29 (152 aa).

The span at 1–26 (MAKSKNHTTHNQSRKWHRNGIKKPRS) shows a compositional bias: basic residues. The interval 1-32 (MAKSKNHTTHNQSRKWHRNGIKKPRSQRYESL) is disordered. Residue lysine 5 is modified to N6-methyllysine. A Phosphoserine modification is found at serine 31. Position 33 is an N6-acetyllysine (lysine 33). The disordered stretch occupies residues 119 to 152 (CRPKSQAKASTKAKPPAAAAPAAKGAQAPTKAPE). Residues 121 to 152 (PKSQAKASTKAKPPAAAAPAAKGAQAPTKAPE) show a composition bias toward low complexity.

This sequence belongs to the eukaryotic ribosomal protein eL29 family. In terms of assembly, component of the large ribosomal subunit.

The protein resides in the cytoplasm. Component of the large ribosomal subunit. The ribosome is a large ribonucleoprotein complex responsible for the synthesis of proteins in the cell. In Bos taurus (Bovine), this protein is Large ribosomal subunit protein eL29 (RPL29).